We begin with the raw amino-acid sequence, 509 residues long: Lanosterol 14-alpha demethylase (509 aa).

Residues 30 to 50 (GNLLSMLLIACAFTLSLVYLF) traverse the membrane as a helical segment. Cys-455 is a binding site for heme.

It belongs to the cytochrome P450 family. Requires heme as cofactor. Post-translationally, ubiquitinated by MARCHF6, leading to proteasomal degradation.

The protein resides in the endoplasmic reticulum membrane. It localises to the microsome membrane. The enzyme catalyses a 14alpha-methyl steroid + 3 reduced [NADPH--hemoprotein reductase] + 3 O2 = a Delta(14) steroid + formate + 3 oxidized [NADPH--hemoprotein reductase] + 4 H2O + 4 H(+). The catalysed reaction is lanosterol + 3 reduced [NADPH--hemoprotein reductase] + 3 O2 = 4,4-dimethyl-5alpha-cholesta-8,14,24-trien-3beta-ol + formate + 3 oxidized [NADPH--hemoprotein reductase] + 4 H2O + 4 H(+). It catalyses the reaction 24,25-dihydrolanosterol + 3 reduced [NADPH--hemoprotein reductase] + 3 O2 = 4,4-dimethyl-8,14-cholestadien-3beta-ol + formate + 3 oxidized [NADPH--hemoprotein reductase] + 4 H2O + 4 H(+). It carries out the reaction a 14alpha-methyl steroid + reduced [NADPH--hemoprotein reductase] + O2 = a 14alpha-hydroxymethyl steroid + oxidized [NADPH--hemoprotein reductase] + H2O + H(+). The enzyme catalyses a 14alpha-hydroxymethyl steroid + reduced [NADPH--hemoprotein reductase] + O2 = a 14alpha-formyl steroid + oxidized [NADPH--hemoprotein reductase] + 2 H2O + H(+). The catalysed reaction is a 14alpha-formyl steroid + reduced [NADPH--hemoprotein reductase] + O2 = a Delta(14) steroid + formate + oxidized [NADPH--hemoprotein reductase] + H2O + 2 H(+). It catalyses the reaction lanosterol + reduced [NADPH--hemoprotein reductase] + O2 = 32-hydroxylanosterol + oxidized [NADPH--hemoprotein reductase] + H2O + H(+). It carries out the reaction 32-hydroxylanosterol + reduced [NADPH--hemoprotein reductase] + O2 = 32-oxolanosterol + oxidized [NADPH--hemoprotein reductase] + 2 H2O + H(+). The enzyme catalyses 32-oxolanosterol + reduced [NADPH--hemoprotein reductase] + O2 = 4,4-dimethyl-5alpha-cholesta-8,14,24-trien-3beta-ol + formate + oxidized [NADPH--hemoprotein reductase] + H2O + 2 H(+). The catalysed reaction is 24,25-dihydrolanosterol + reduced [NADPH--hemoprotein reductase] + O2 = 32-hydroxy-24,25-dihydrolanosterol + oxidized [NADPH--hemoprotein reductase] + H2O + H(+). It catalyses the reaction 32-hydroxy-24,25-dihydrolanosterol + reduced [NADPH--hemoprotein reductase] + O2 = 32-oxo-24,25-dihydrolanosterol + oxidized [NADPH--hemoprotein reductase] + 2 H2O + H(+). It carries out the reaction 32-oxo-24,25-dihydrolanosterol + reduced [NADPH--hemoprotein reductase] + O2 = 4,4-dimethyl-8,14-cholestadien-3beta-ol + formate + oxidized [NADPH--hemoprotein reductase] + H2O + 2 H(+). It functions in the pathway steroid biosynthesis; zymosterol biosynthesis; zymosterol from lanosterol: step 1/6. Inhibited by azalanstat. Inhibited by azole antifungal agents ketoconazole, itraconazole and fluconazole. In terms of biological role, sterol 14alpha-demethylase that plays a critical role in the cholesterol biosynthesis pathway, being cholesterol the major sterol component in mammalian membranes as well as a precursor for bile acid and steroid hormone synthesis. Cytochrome P450 monooxygenase that catalyzes the three-step oxidative removal of the 14alpha-methyl group (C-32) of sterols such as lanosterol (lanosta-8,24-dien-3beta-ol) and 24,25-dihydrolanosterol (DHL) in the form of formate, and converts the sterols to 4,4-dimethyl-5alpha-cholesta-8,14,24-trien-3beta-ol and 4,4-dimethyl-8,14-cholestadien-3beta-ol, respectively, which are intermediates of cholesterol biosynthesis. Can also demethylate substrates not intrinsic to mammals, such as eburicol (24-methylene-24,25-dihydrolanosterol), but at a lower rate than DHL. The chain is Lanosterol 14-alpha demethylase from Macaca fascicularis (Crab-eating macaque).